An 83-amino-acid polypeptide reads, in one-letter code: Toxin To15 (83 aa).

An N-terminal signal peptide occupies residues 1 to 19; sequence MKGIILLISCLMLIEVVVG. The 62-residue stretch at 21 to 82 folds into the LCN-type CS-alpha/beta domain; the sequence is KEGYPLDSSG…IWNAKTNKCY (62 aa). Intrachain disulfides connect cysteine 31-cysteine 81, cysteine 35-cysteine 57, cysteine 43-cysteine 62, and cysteine 47-cysteine 64.

The protein belongs to the long (4 C-C) scorpion toxin superfamily. Sodium channel inhibitor family. Beta subfamily. In terms of tissue distribution, expressed by the venom gland.

It localises to the secreted. In terms of biological role, beta toxins bind voltage-independently at site-4 of sodium channels (Nav) and shift the voltage of activation toward more negative potentials thereby affecting sodium channel activation and promoting spontaneous and repetitive firing. This chain is Toxin To15, found in Tityus obscurus (Amazonian scorpion).